Reading from the N-terminus, the 274-residue chain is NH(3)-dependent NAD(+) synthetase (274 aa).

46–53 (GISGGQDS) contacts ATP. Residue Asp-52 coordinates Mg(2+). Arg-140 serves as a coordination point for deamido-NAD(+). An ATP-binding site is contributed by Thr-160. Glu-165 lines the Mg(2+) pocket. The deamido-NAD(+) site is built by Lys-173 and Asp-180. Residues Lys-189 and Thr-211 each coordinate ATP. 260 to 261 (HK) contributes to the deamido-NAD(+) binding site.

It belongs to the NAD synthetase family. In terms of assembly, homodimer.

It carries out the reaction deamido-NAD(+) + NH4(+) + ATP = AMP + diphosphate + NAD(+) + H(+). It functions in the pathway cofactor biosynthesis; NAD(+) biosynthesis; NAD(+) from deamido-NAD(+) (ammonia route): step 1/1. In terms of biological role, catalyzes the ATP-dependent amidation of deamido-NAD to form NAD. Uses ammonia as a nitrogen source. In Lactococcus lactis subsp. lactis (strain IL1403) (Streptococcus lactis), this protein is NH(3)-dependent NAD(+) synthetase.